Here is a 1437-residue protein sequence, read N- to C-terminus: Protein SUPPRESSOR OF npr1-1, CONSTITUTIVE 1 (1437 aa).

Met-1 carries the post-translational modification N-acetylmethionine. Residues 19–182 (RRYDVFPSFR…ELAEDVLRKT (164 aa)) form the TIR domain. 28-33 (RGEDVR) contacts NAD(+). Glu-93 is a catalytic residue. LRR repeat units lie at residues 554–576 (MRNLQYLEIGYYGDLPQSLVYLP), 577–598 (LKLRLLDWDDCPLKSLPSTFKA), 600–621 (YLVNLIMKYSKLEKLWEGTLPL), 622–645 (GSLKEMNLRYSNNLKEIPDLSLAI), 647–668 (LEELDLVGCKSLVTLPSSIQNA), 670–691 (KLIYLDMSDCKKLESFPTDLNL), 692–715 (ESLEYLNLTGCPNLRNFPAIKMGC), 781–805 (LGSLEGMDLSESENLTEIPDLSKAT), 807–828 (LESLILNNCKSLVTLPSTIGNL), 829–851 (HRLVRLEMKECTGLEVLPTDVNL), 852–875 (SSLETLDLSGCSSLRSFPLISTNI), 877–895 (WLYLENTAIEEIPSTIGNL), 897–918 (RLVRLEMKKCTGLEVLPTDVNL), 919–939 (SSLETLDLSGCSSLRSFPLIS), 940–962 (ESIKWLYLENTAIEEIPDLSKAT), 964–985 (LKNLKLNNCKSLVTLPTTIGNL), 1009–1029 (SSLMILDLSGCSSLRTFPLIS), 1030–1052 (TNIVWLYLENTAIEEIPSTIGNL), 1054–1075 (RLVKLEMKECTGLEVLPTDVNL), 1076–1096 (SSLMILDLSGCSSLRTFPLIS), 1097–1121 (TRIECLYLQNTAIEEVPCCIEDFTR), 1123–1143 (TVLMMYCCQRLKTISPNIFRL), and 1161–1185 (LSDATVVATMEDHVSCVPLSENIEY).

The protein belongs to the disease resistance TIR-NB-LRR family. As to quaternary structure, homodimer. Interacts (via TIR domain) with TPR1. Interacts with EDS1. Interacts with SRFR1. Interacts with HSP90-3. Binds to MORC1/CRT1. Interacts with TRAF1B. Post-translationally, met-1 is specifically acetylated by N-terminal acetyltransferase complex A (NatA). The NatA-mediated acetylation serves as a degradation signal. Met-1 is specifically acetylated by N-terminal acetyltransferase complex B (NatB). The NatB-mediated acetylation stabilizes SNC1. As to expression, expressed in guard cells and epidermal cells, but not detected in mesophyll cells.

Its subcellular location is the cytoplasm. It is found in the microsome. It localises to the nucleus. The enzyme catalyses NAD(+) + H2O = ADP-D-ribose + nicotinamide + H(+). Disease resistance protein of the TIR-NB-LRR-type. Part of the RPP5 locus that contains a cluster of several paralogous disease resistance (R) genes. Resistance proteins guard the plant against pathogens that contain an appropriate avirulence protein via an indirect interaction with this avirulence protein. That triggers a defense system including the hypersensitive response, which restricts the pathogen growth. Probably acts as a NAD(+) hydrolase (NADase): in response to activation, catalyzes cleavage of NAD(+) into ADP-D-ribose (ADPR) and nicotinamide; NAD(+) cleavage triggering a defense system that promotes cell death. Expression regulated by MOS1 at chromatin level. Nuclear localization of SNC1 is essential for its activity. ABA deficiency can rescue high-temperature inhibition of SNC1-mediated defense responses. The sequence is that of Protein SUPPRESSOR OF npr1-1, CONSTITUTIVE 1 from Arabidopsis thaliana (Mouse-ear cress).